The sequence spans 357 residues: Outer membrane protein YedS (357 aa).

The signal sequence occupies residues 1 to 21 (MKRKVLAMLVPALLVAGAANA).

This sequence belongs to the Gram-negative porin family.

The protein localises to the cell outer membrane. Functionally, forms pores that allow passive diffusion of small molecules across the outer membrane. Plays a role in resistance to carbapenems; this carbapenem-resistant, noncarbapenemase-producing clinical isolate has a deletion in ompF and a mutated marR gene that does not induce expression of this protein. However if this gene is overexpressed, or if wild-type marR is introduced, this leads to decreased resistance to the carbapenem antibiotics ertapenem, imipenem and meropenem. In Escherichia coli, this protein is Outer membrane protein YedS.